The chain runs to 384 residues: Chaperone protein DnaJ (384 aa).

The J domain occupies 5 to 70 (DYYEVLGVSK…DKKAAYDRYG (66 aa)). The interval 16–47 (ASSDDIKKGYRRKAKELHPDRNKDDPNAEAQF) is disordered. The span at 31–47 (ELHPDRNKDDPNAEAQF) shows a compositional bias: basic and acidic residues. The CR-type zinc-finger motif lies at 143 to 221 (GLQKTINVPT…CQGAGRVEKD (79 aa)). Positions 156, 159, 173, 176, 195, 198, 209, and 212 each coordinate Zn(2+). CXXCXGXG motif repeat units lie at residues 156–163 (CKTCNGSG), 173–180 (CPTCSGMG), 195–202 (CPTCSGLG), and 209–216 (CKSCQGAG).

This sequence belongs to the DnaJ family. In terms of assembly, homodimer. It depends on Zn(2+) as a cofactor.

The protein localises to the cytoplasm. Participates actively in the response to hyperosmotic and heat shock by preventing the aggregation of stress-denatured proteins and by disaggregating proteins, also in an autonomous, DnaK-independent fashion. Unfolded proteins bind initially to DnaJ; upon interaction with the DnaJ-bound protein, DnaK hydrolyzes its bound ATP, resulting in the formation of a stable complex. GrpE releases ADP from DnaK; ATP binding to DnaK triggers the release of the substrate protein, thus completing the reaction cycle. Several rounds of ATP-dependent interactions between DnaJ, DnaK and GrpE are required for fully efficient folding. Also involved, together with DnaK and GrpE, in the DNA replication of plasmids through activation of initiation proteins. The polypeptide is Chaperone protein DnaJ (Roseobacter denitrificans (strain ATCC 33942 / OCh 114) (Erythrobacter sp. (strain OCh 114))).